The sequence spans 1053 residues: Sal-like protein 4 (1053 aa).

Residues 1-62 (MSRRKQAKPQ…DEVASEDEAT (62 aa)) form a disordered region. Positions 20–46 (EQQPQQQTPEFADAAPAAPAAGELGAP) are enriched in low complexity. Residue S57 is modified to Phosphoserine. The C2H2-type 1; atypical zinc finger occupies 72–94 (HVCEKCCAEFFSISEFLEHKKNC). The disordered stretch occupies residues 116 to 149 (SGAVLSHQPTSPGSKDCHRENGGSSEDMKEKPDA). Residues 130–149 (KDCHRENGGSSEDMKEKPDA) are compositionally biased toward basic and acidic residues. Residue K156 forms a Glycyl lysine isopeptide (Lys-Gly) (interchain with G-Cter in SUMO1); alternate linkage. Residue K156 forms a Glycyl lysine isopeptide (Lys-Gly) (interchain with G-Cter in SUMO2); alternate linkage. Residues K175, K190, and K290 each participate in a glycyl lysine isopeptide (Lys-Gly) (interchain with G-Cter in SUMO2) cross-link. A Phosphoserine modification is found at S307. Residue K316 forms a Glycyl lysine isopeptide (Lys-Gly) (interchain with G-Cter in SUMO1); alternate linkage. A Glycyl lysine isopeptide (Lys-Gly) (interchain with G-Cter in SUMO2); alternate cross-link involves residue K316. K372 is covalently cross-linked (Glycyl lysine isopeptide (Lys-Gly) (interchain with G-Cter in SUMO2)). A Glycyl lysine isopeptide (Lys-Gly) (interchain with G-Cter in SUMO1); alternate cross-link involves residue K374. K374 participates in a covalent cross-link: Glycyl lysine isopeptide (Lys-Gly) (interchain with G-Cter in SUMO2); alternate. 2 C2H2-type zinc fingers span residues 382 to 404 (HKCK…LRSH) and 410 to 432 (FVCS…FHRH). Residue K436 forms a Glycyl lysine isopeptide (Lys-Gly) (interchain with G-Cter in SUMO2) linkage. Polar residues predominate over residues 483-496 (VGLPQNLSSGTNPK). Residues 483 to 546 (VGLPQNLSSG…QGSGTPEPGS (64 aa)) are disordered. At T541 the chain carries Phosphothreonine. Residue K550 forms a Glycyl lysine isopeptide (Lys-Gly) (interchain with G-Cter in SUMO2) linkage. 2 C2H2-type zinc fingers span residues 566-588 (NECL…YRTH) and 594-616 (FQCK…LGVH). Glycyl lysine isopeptide (Lys-Gly) (interchain with G-Cter in SUMO2) cross-links involve residues K597 and K623. The C2H2-type 6 zinc finger occupies 626 to 648 (HSCPICQKKFTNAVMLQQHIRMH). Disordered stretches follow at residues 694-714 (EEVS…PLPS), 736-776 (VGPA…QSRS), and 788-828 (LSPA…LPST). Positions 698-708 (SQEAPSSSSKV) are enriched in low complexity. Composition is skewed to polar residues over residues 743–776 (LQRQ…QSRS) and 788–797 (LSPANSQAES). Phosphoserine is present on residues S776 and S789. Positions 810–821 (ESSENSRTEMEG) are enriched in basic and acidic residues. A Glycyl lysine isopeptide (Lys-Gly) (interchain with G-Cter in SUMO1); alternate cross-link involves residue K838. Residue K838 forms a Glycyl lysine isopeptide (Lys-Gly) (interchain with G-Cter in SUMO2); alternate linkage. The residue at position 852 (S852) is a Phosphoserine. The C2H2-type 7 zinc-finger motif lies at 870-892 (HGCTRCGKNFSSASALQIHERTH). K896 participates in a covalent cross-link: Glycyl lysine isopeptide (Lys-Gly) (interchain with G-Cter in SUMO2). The C2H2-type 8 zinc-finger motif lies at 898–920 (FVCNICGRAFTTKGNLKVHYMTH). Glycyl lysine isopeptide (Lys-Gly) (interchain with G-Cter in SUMO2) cross-links involve residues K932 and K947. Residues 1018–1039 (GSQSGISADVEKPSATDGVPKH) are disordered. At S1019 the chain carries Phosphoserine.

It belongs to the sal C2H2-type zinc-finger protein family. Interacts with POU5F1/OCT4. Interacts with NANOG. Interacts with BEND3. Interacts with NSD2 (via PHD-type zinc fingers 1, 2 and 3). Interacts with NRBP1. Isoform SALL4B exists primarily as a ubiquitinated form. In terms of processing, sumoylation with both SUMO1 and SUMO2 regulates the stability, subcellular localization, transcriptional activity, and may reduce interaction with POU5F1/OCT4. Expressed in testis. Constitutively expressed in acute myeloid leukemia (AML).

Its subcellular location is the cytoplasm. It localises to the nucleus. In terms of biological role, transcription factor with a key role in the maintenance and self-renewal of embryonic and hematopoietic stem cells. In Homo sapiens (Human), this protein is Sal-like protein 4 (SALL4).